Here is a 407-residue protein sequence, read N- to C-terminus: Nicotinate phosphoribosyltransferase (407 aa).

The residue at position 224 (His224) is a Phosphohistidine; by autocatalysis.

The protein belongs to the NAPRTase family. In terms of processing, transiently phosphorylated on a His residue during the reaction cycle. Phosphorylation strongly increases the affinity for substrates and increases the rate of nicotinate D-ribonucleotide production. Dephosphorylation regenerates the low-affinity form of the enzyme, leading to product release.

The enzyme catalyses nicotinate + 5-phospho-alpha-D-ribose 1-diphosphate + ATP + H2O = nicotinate beta-D-ribonucleotide + ADP + phosphate + diphosphate. The protein operates within cofactor biosynthesis; NAD(+) biosynthesis; nicotinate D-ribonucleotide from nicotinate: step 1/1. In terms of biological role, catalyzes the synthesis of beta-nicotinate D-ribonucleotide from nicotinate and 5-phospho-D-ribose 1-phosphate at the expense of ATP. The sequence is that of Nicotinate phosphoribosyltransferase from Pseudomonas syringae pv. tomato (strain ATCC BAA-871 / DC3000).